Reading from the N-terminus, the 1080-residue chain is Isoleucine--tRNA ligase (1080 aa).

Residues 48-58 carry the 'HIGH' region motif; the sequence is PYASGSIHLGT. The short motif at 628-632 is the 'KMSKS' region element; the sequence is KMSKS. Lys-631 contacts ATP.

Belongs to the class-I aminoacyl-tRNA synthetase family. IleS type 2 subfamily. Monomer. Requires Zn(2+) as cofactor.

It is found in the cytoplasm. It catalyses the reaction tRNA(Ile) + L-isoleucine + ATP = L-isoleucyl-tRNA(Ile) + AMP + diphosphate. Functionally, catalyzes the attachment of isoleucine to tRNA(Ile). As IleRS can inadvertently accommodate and process structurally similar amino acids such as valine, to avoid such errors it has two additional distinct tRNA(Ile)-dependent editing activities. One activity is designated as 'pretransfer' editing and involves the hydrolysis of activated Val-AMP. The other activity is designated 'posttransfer' editing and involves deacylation of mischarged Val-tRNA(Ile). The chain is Isoleucine--tRNA ligase from Methanopyrus kandleri (strain AV19 / DSM 6324 / JCM 9639 / NBRC 100938).